The chain runs to 133 residues: Small ribosomal subunit protein uS8 (133 aa).

It belongs to the universal ribosomal protein uS8 family. Part of the 30S ribosomal subunit. Contacts proteins S5 and S12.

Functionally, one of the primary rRNA binding proteins, it binds directly to 16S rRNA central domain where it helps coordinate assembly of the platform of the 30S subunit. This chain is Small ribosomal subunit protein uS8, found in Lachnoclostridium phytofermentans (strain ATCC 700394 / DSM 18823 / ISDg) (Clostridium phytofermentans).